Consider the following 214-residue polypeptide: 3-isopropylmalate dehydratase small subunit (214 aa).

This sequence belongs to the LeuD family. LeuD type 1 subfamily. As to quaternary structure, heterodimer of LeuC and LeuD.

It carries out the reaction (2R,3S)-3-isopropylmalate = (2S)-2-isopropylmalate. It functions in the pathway amino-acid biosynthesis; L-leucine biosynthesis; L-leucine from 3-methyl-2-oxobutanoate: step 2/4. Its function is as follows. Catalyzes the isomerization between 2-isopropylmalate and 3-isopropylmalate, via the formation of 2-isopropylmaleate. The sequence is that of 3-isopropylmalate dehydratase small subunit from Pseudomonas entomophila (strain L48).